The following is a 209-amino-acid chain: Thymidylate kinase (209 aa).

ATP is bound at residue glycine 7 to serine 14.

This sequence belongs to the thymidylate kinase family.

The catalysed reaction is dTMP + ATP = dTDP + ADP. In terms of biological role, phosphorylation of dTMP to form dTDP in both de novo and salvage pathways of dTTP synthesis. This chain is Thymidylate kinase, found in Solidesulfovibrio magneticus (strain ATCC 700980 / DSM 13731 / RS-1) (Desulfovibrio magneticus).